The chain runs to 550 residues: Hydroxylamine reductase (550 aa).

The [2Fe-2S] cluster site is built by Cys3, Cys6, Cys18, and Cys25. The hybrid [4Fe-2O-2S] cluster site is built by His249, Glu273, Cys317, Cys405, Cys433, Cys458, Glu492, and Lys494. Cys405 bears the Cysteine persulfide mark.

The protein belongs to the HCP family. It depends on [2Fe-2S] cluster as a cofactor. Hybrid [4Fe-2O-2S] cluster is required as a cofactor.

It localises to the cytoplasm. It catalyses the reaction A + NH4(+) + H2O = hydroxylamine + AH2 + H(+). Functionally, catalyzes the reduction of hydroxylamine to form NH(3) and H(2)O. The sequence is that of Hydroxylamine reductase from Escherichia coli O6:K15:H31 (strain 536 / UPEC).